We begin with the raw amino-acid sequence, 226 residues long: Octanoyltransferase (226 aa).

The region spanning 31-226 (PETPDALWIC…SQKLGTYLAP (196 aa)) is the BPL/LPL catalytic domain. Residues 70–77 (RGGQVTFH), 159–161 (ALG), and 172–174 (GVA) contribute to the substrate site. The Acyl-thioester intermediate role is filled by Cys-190.

Belongs to the LipB family.

Its subcellular location is the cytoplasm. It carries out the reaction octanoyl-[ACP] + L-lysyl-[protein] = N(6)-octanoyl-L-lysyl-[protein] + holo-[ACP] + H(+). It participates in protein modification; protein lipoylation via endogenous pathway; protein N(6)-(lipoyl)lysine from octanoyl-[acyl-carrier-protein]: step 1/2. In terms of biological role, catalyzes the transfer of endogenously produced octanoic acid from octanoyl-acyl-carrier-protein onto the lipoyl domains of lipoate-dependent enzymes. Lipoyl-ACP can also act as a substrate although octanoyl-ACP is likely to be the physiological substrate. This is Octanoyltransferase from Variovorax paradoxus (strain S110).